Here is a 492-residue protein sequence, read N- to C-terminus: Glycerol kinase (492 aa).

Residue threonine 11 coordinates ADP. Residues threonine 11 and threonine 12 each contribute to the ATP site. Sn-glycerol 3-phosphate is bound at residue threonine 11. Lysine 15 contributes to the ADP binding site. The sn-glycerol 3-phosphate site is built by arginine 79, glutamate 80, tyrosine 129, and aspartate 238. 5 residues coordinate glycerol: arginine 79, glutamate 80, tyrosine 129, aspartate 238, and glutamine 239. ADP is bound by residues threonine 260, glycine 302, glycine 403, and asparagine 407. Residues threonine 260, glycine 302, and glycine 403 each coordinate ATP.

It belongs to the FGGY kinase family.

It catalyses the reaction glycerol + ATP = sn-glycerol 3-phosphate + ADP + H(+). Its pathway is polyol metabolism; glycerol degradation via glycerol kinase pathway; sn-glycerol 3-phosphate from glycerol: step 1/1. Its activity is regulated as follows. Inhibited by fructose 1,6-bisphosphate (FBP). Its function is as follows. Key enzyme in the regulation of glycerol uptake and metabolism. Catalyzes the phosphorylation of glycerol to yield sn-glycerol 3-phosphate. The chain is Glycerol kinase from Aquifex aeolicus (strain VF5).